The following is a 307-amino-acid chain: Methionyl-tRNA formyltransferase (307 aa).

Residue 108-111 (SLLP) participates in (6S)-5,6,7,8-tetrahydrofolate binding.

It belongs to the Fmt family.

It catalyses the reaction L-methionyl-tRNA(fMet) + (6R)-10-formyltetrahydrofolate = N-formyl-L-methionyl-tRNA(fMet) + (6S)-5,6,7,8-tetrahydrofolate + H(+). Functionally, attaches a formyl group to the free amino group of methionyl-tRNA(fMet). The formyl group appears to play a dual role in the initiator identity of N-formylmethionyl-tRNA by promoting its recognition by IF2 and preventing the misappropriation of this tRNA by the elongation apparatus. In Xylella fastidiosa (strain M23), this protein is Methionyl-tRNA formyltransferase.